Reading from the N-terminus, the 375-residue chain is Aminomethyltransferase (375 aa).

The protein belongs to the GcvT family. As to quaternary structure, the glycine cleavage system is composed of four proteins: P, T, L and H.

It catalyses the reaction N(6)-[(R)-S(8)-aminomethyldihydrolipoyl]-L-lysyl-[protein] + (6S)-5,6,7,8-tetrahydrofolate = N(6)-[(R)-dihydrolipoyl]-L-lysyl-[protein] + (6R)-5,10-methylene-5,6,7,8-tetrahydrofolate + NH4(+). The glycine cleavage system catalyzes the degradation of glycine. The chain is Aminomethyltransferase from Cupriavidus pinatubonensis (strain JMP 134 / LMG 1197) (Cupriavidus necator (strain JMP 134)).